We begin with the raw amino-acid sequence, 327 residues long: MSKKLRNFLVRIIVAAFASFAVMAIPPYHHNTVLAKTVSVNQTYGEYKDYYTVIGESNIDQSAFPKIYKTTERVYKGQGTSEKRVTVSDVVYNPLDGYKRSTGAYGVVTKDMIDMSKGYREKWETNPEPSGWFRFYNRADNEEISEKEYDSRRTKSYKVTNNVPVVLTTLKGKKYNSHLFVASHLFADSLGGKSIRKNAITGTQMQNVGTRKGGMQYIEKKVLSHITKNPDVYVFYSAIPEYQGAELLARSVLVSALSSDGVINETVRVFNTADGFNINYEKGGLLTESPVSEIDNIEDSTTDEIENSVDDSEEIVYNDTTTEEEEN.

The segment at residues 1–24 is a signal peptide (or 35); the sequence is MSKKLRNFLVRIIVAAFASFAVMA. Residues 299–327 are disordered; that stretch reads DSTTDEIENSVDDSEEIVYNDTTTEEEEN.

It carries out the reaction Endonucleolytic cleavage to 5'-phosphodinucleotide and 5'-phosphooligonucleotide end-products.. May have a role in S.equisimilis virulence. The polypeptide is Deoxyribonuclease (sdc) (Streptococcus dysgalactiae subsp. equisimilis (Streptococcus equisimilis)).